Here is a 298-residue protein sequence, read N- to C-terminus: Probable GTP 3',8-cyclase (298 aa).

Residues 4 to 221 (RYGREIRSFR…VFTRKFMQNR (218 aa)) form the Radical SAM core domain. Position 13 (Arg-13) interacts with GTP. [4Fe-4S] cluster contacts are provided by Cys-20 and Cys-24. Tyr-26 provides a ligand contact to S-adenosyl-L-methionine. Position 27 (Cys-27) interacts with [4Fe-4S] cluster. Lys-61 provides a ligand contact to GTP. S-adenosyl-L-methionine is bound at residue Gly-65. GTP is bound at residue Thr-91. Ser-115 is an S-adenosyl-L-methionine binding site. A GTP-binding site is contributed by Lys-152. The [4Fe-4S] cluster site is built by Cys-243 and Cys-246. 248–250 (RIR) is a binding site for GTP. Cys-260 serves as a coordination point for [4Fe-4S] cluster.

Belongs to the radical SAM superfamily. MoaA family. [4Fe-4S] cluster is required as a cofactor.

The catalysed reaction is GTP + AH2 + S-adenosyl-L-methionine = (8S)-3',8-cyclo-7,8-dihydroguanosine 5'-triphosphate + 5'-deoxyadenosine + L-methionine + A + H(+). It participates in cofactor biosynthesis; molybdopterin biosynthesis. In terms of biological role, catalyzes the cyclization of GTP to (8S)-3',8-cyclo-7,8-dihydroguanosine 5'-triphosphate. The chain is Probable GTP 3',8-cyclase from Methanococcus maripaludis (strain C7 / ATCC BAA-1331).